Consider the following 657-residue polypeptide: MLFSCRAPSLLQRTALSSPLRLFAPCRPSFSRTFVTTTVRFSVEMETVNTSERLAQLRELMKQNNLDVYIVPSEDSHQSEYIAHCDARREFISGFTGSAGTAVISTTAAALSTDGRYFNQAAKQLDSNWKLLKRGLEGVLTWQEWTAEQAEGGKIVGVDPSVITAASARKLSETLEKGGSKLVGIEQNLVDQIWGTHRPQRPSEKVKIHPIEYAGKPFQEKIADLRKELKTKKRAGFIVSVLDEIAWLFNLRGNDIPYNPVFFSYAVITPDTVDLYIDDEKLSPEVKVHLGSDVVIKPYESIFADAKALSAKAPLTESGAPMKYLTSNKASWALSLSFGGEKKLDEARSPISDAKAIKNEVELKGMRDCHIRDGAALTEYFAWLENELINKKSTLDEVDGADKLEQIRSKHDKFVGLSFDTISSTGPNAAVIHYKPEKGVCSVIDPNAIYLCDSGAQYLDGTTDTTRTFHFSTPTEMEKKAFTLVLKGLIALDTAVFPKGTSGFALDALARQHLWRQGLDYLHGTGHGVGAYLNVHEGPIGVGTRIQYSEVSLSPGNVISDEPGYYEDGKFGIRIENIIMAREVETPYKFGDKPWLGFEHVTMTPIGQNLIETSLLSKEERQWVDNYHAEVWEKTSGFFKQDELTLNWLKKETQPLK.

Positions 453, 464, 562, and 576 each coordinate Mn(2+).

The protein belongs to the peptidase M24B family. Mn(2+) serves as cofactor.

The enzyme catalyses Release of any N-terminal amino acid, including proline, that is linked to proline, even from a dipeptide or tripeptide.. Functionally, catalyzes the removal of a penultimate prolyl residue from the N-termini of peptides. The chain is Probable Xaa-Pro aminopeptidase P (ampp) from Talaromyces stipitatus (strain ATCC 10500 / CBS 375.48 / QM 6759 / NRRL 1006) (Penicillium stipitatum).